The primary structure comprises 166 residues: Phosphopantetheine adenylyltransferase (166 aa).

Residue Ser11 participates in substrate binding. Residues Ser11 to Phe12 and His19 each bind ATP. Substrate is bound by residues Lys43, Leu75, and Arg89. Residues Gly90–Arg92, Glu100, and Tyr125–Ser131 each bind ATP.

Belongs to the bacterial CoaD family. Homohexamer. It depends on Mg(2+) as a cofactor.

It localises to the cytoplasm. The catalysed reaction is (R)-4'-phosphopantetheine + ATP + H(+) = 3'-dephospho-CoA + diphosphate. The protein operates within cofactor biosynthesis; coenzyme A biosynthesis; CoA from (R)-pantothenate: step 4/5. In terms of biological role, reversibly transfers an adenylyl group from ATP to 4'-phosphopantetheine, yielding dephospho-CoA (dPCoA) and pyrophosphate. This chain is Phosphopantetheine adenylyltransferase, found in Syntrophotalea carbinolica (strain DSM 2380 / NBRC 103641 / GraBd1) (Pelobacter carbinolicus).